The following is a 333-amino-acid chain: GTPase Obg (333 aa).

The Obg domain maps to 1-159 (MKFIDEATIT…ATVRLELKLL (159 aa)). Residues 63–85 (KQFAAPNGAPGEGRQKTGKSGDD) are disordered. Basic and acidic residues predominate over residues 75 to 84 (GRQKTGKSGD). In terms of domain architecture, OBG-type G spans 160-329 (ADVGLIGLPN…LKKHLFELLC (170 aa)). GTP-binding positions include 166 to 173 (GLPNAGKS), 191 to 195 (FTTLS), 213 to 216 (DIPG), 283 to 286 (NKMD), and 310 to 312 (SAA). Residues serine 173 and threonine 193 each contribute to the Mg(2+) site.

It belongs to the TRAFAC class OBG-HflX-like GTPase superfamily. OBG GTPase family. In terms of assembly, monomer. Mg(2+) serves as cofactor.

It localises to the cytoplasm. In terms of biological role, an essential GTPase which binds GTP, GDP and possibly (p)ppGpp with moderate affinity, with high nucleotide exchange rates and a fairly low GTP hydrolysis rate. Plays a role in control of the cell cycle, stress response, ribosome biogenesis and in those bacteria that undergo differentiation, in morphogenesis control. The chain is GTPase Obg from Desulfosudis oleivorans (strain DSM 6200 / JCM 39069 / Hxd3) (Desulfococcus oleovorans).